Consider the following 1388-residue polypeptide: Collagen alpha-1(XV) chain (1388 aa).

The signal sequence occupies residues methionine 1–threonine 27. A Laminin G-like domain is found at alanine 66–leucine 249. Residues threonine 223–glutamine 250 are disordered. The nonhelical region 1 (NC1) stretch occupies residues arginine 229 to valine 555. Over residues serine 240–leucine 249 the composition is skewed to polar residues. 2 O-linked (Xyl...) (chondroitin sulfate) serine glycosylation sites follow: serine 243 and serine 247. O-linked (GalNAc...) threonine glycosylation is present at threonine 265. The disordered stretch occupies residues glutamine 266–threonine 301. Asparagine 306 and asparagine 324 each carry an N-linked (GlcNAc...) asparagine glycan. Serine 343 carries an O-linked (Xyl...) (chondroitin sulfate) serine glycan. Tandem repeats lie at residues alanine 358 to leucine 408, alanine 409 to leucine 459, threonine 460 to leucine 509, and alanine 510 to valine 555. The 4 X tandem repeats stretch occupies residues alanine 358 to valine 555. Positions threonine 371–proline 795 are disordered. The span at serine 379–glutamate 392 shows a compositional bias: polar residues. Residues alanine 409–alanine 420 are compositionally biased toward low complexity. Residues glycine 452–threonine 472 show a composition bias toward polar residues. Residues alanine 510 to glycine 527 show a composition bias toward low complexity. Positions serine 528–threonine 540 are enriched in pro residues. The segment at glycine 556–glutamate 573 is triple-helical region 1 (COL1). The interval leucine 574–arginine 618 is nonhelical region 2 (NC2). The span at serine 595 to aspartate 609 shows a compositional bias: gly residues. 2 Collagen-like domains span residues glycine 619 to glutamate 680 and lysine 681 to proline 731. The interval glycine 619–glycine 732 is triple-helical region 2 (COL2). The segment covering proline 620–proline 630 has biased composition (pro residues). N-linked (GlcNAc...) asparagine glycosylation occurs at asparagine 687. Residues valine 716–proline 731 are compositionally biased toward pro residues. The nonhelical region 3 (NC3) stretch occupies residues cysteine 733–isoleucine 763. An O-linked (Xyl...) (chondroitin sulfate) serine glycan is attached at serine 745. A triple-helical region 3 (COL3) region spans residues glycine 764–isoleucine 798. The segment covering lysine 766 to methionine 780 has biased composition (basic and acidic residues). Positions lysine 799–valine 822 are nonhelical region 4 (NC4). 2 N-linked (GlcNAc...) asparagine glycosylation sites follow: asparagine 807 and asparagine 814. In terms of domain architecture, Collagen-like 3 spans glycine 823 to glycine 865. The segment at glycine 823–isoleucine 867 is triple-helical region 4 (COL4). The segment covering proline 827 to arginine 840 has biased composition (pro residues). Positions proline 827–proline 864 are disordered. Residues leucine 868–methionine 878 form a nonhelical region 5 (NC5) region. One can recognise a Collagen-like 4 domain in the interval glycine 879–glycine 927. A triple-helical region 5 (COL5) region spans residues glycine 879 to valine 949. The segment at isoleucine 950–histidine 983 is nonhelical region 6 (NC6). The tract at residues glycine 984–proline 1013 is triple-helical region 6 (COL6). 2 disordered regions span residues glutamate 988–leucine 1016 and glutamate 1029–asparagine 1133. Residues leucine 1014–lysine 1027 are nonhelical region 7 (NC7). The tract at residues glycine 1028–isoleucine 1045 is triple-helical region 7 (COL7). Residues glutamate 1029–aspartate 1044 show a composition bias toward basic and acidic residues. Residue asparagine 1046 is glycosylated (N-linked (GlcNAc...) asparagine). Positions asparagine 1046–serine 1052 are nonhelical region 8 (NC8). Residues glycine 1053 to proline 1107 form a triple-helical region 8 (COL8) region. Composition is skewed to pro residues over residues glutamine 1075–proline 1107 and proline 1117–proline 1126. The nonhelical region 9 (NC9) stretch occupies residues alanine 1108–proline 1117. Residues glycine 1118–arginine 1132 form a triple-helical region 9 (COL9) region. The nonhelical region 10 (NC10) stretch occupies residues asparagine 1133 to lysine 1388. Cystine bridges form between cysteine 1237–cysteine 1377 and cysteine 1339–cysteine 1369.

Belongs to the multiplexin collagen family. Trimer; disulfide-linked. In terms of assembly, interacts moderately with EFEMP2. Prolines at the third position of the tripeptide repeating unit (G-X-Y) are hydroxylated in some or all of the chains. Post-translationally, O-glycosylated; with core 1 or possibly core 8 glycans. Contains chondroitin sulfate. As to expression, detected in fibroblasts and urine (at protein level). Detected in placenta (at protein level). Expressed predominantly in internal organs such as adrenal gland, pancreas and kidney.

The protein localises to the secreted. Its subcellular location is the extracellular space. It is found in the extracellular matrix. In terms of biological role, structural protein that stabilizes microvessels and muscle cells, both in heart and in skeletal muscle. Functionally, restin potently inhibits angiogenesis. The polypeptide is Collagen alpha-1(XV) chain (COL15A1) (Homo sapiens (Human)).